The primary structure comprises 581 residues: Arginine--tRNA ligase (581 aa).

The short motif at 126-136 (PNLAKEMHVGH) is the 'HIGH' region element.

Belongs to the class-I aminoacyl-tRNA synthetase family. As to quaternary structure, monomer.

It is found in the cytoplasm. The catalysed reaction is tRNA(Arg) + L-arginine + ATP = L-arginyl-tRNA(Arg) + AMP + diphosphate. This chain is Arginine--tRNA ligase, found in Shewanella pealeana (strain ATCC 700345 / ANG-SQ1).